The sequence spans 460 residues: ATP synthase subunit beta (460 aa).

150–157 serves as a coordination point for ATP; that stretch reads GGAGVGKT.

The protein belongs to the ATPase alpha/beta chains family. As to quaternary structure, F-type ATPases have 2 components, CF(1) - the catalytic core - and CF(0) - the membrane proton channel. CF(1) has five subunits: alpha(3), beta(3), gamma(1), delta(1), epsilon(1). CF(0) has three main subunits: a(1), b(2) and c(9-12). The alpha and beta chains form an alternating ring which encloses part of the gamma chain. CF(1) is attached to CF(0) by a central stalk formed by the gamma and epsilon chains, while a peripheral stalk is formed by the delta and b chains.

The protein localises to the cell inner membrane. The enzyme catalyses ATP + H2O + 4 H(+)(in) = ADP + phosphate + 5 H(+)(out). Produces ATP from ADP in the presence of a proton gradient across the membrane. The catalytic sites are hosted primarily by the beta subunits. This chain is ATP synthase subunit beta, found in Sodalis glossinidius (strain morsitans).